The primary structure comprises 88 residues: Putative defensin-like protein 228 (88 aa).

Residues 1-27 (MMKSAILLMVSCVFMFLVVSYIQDVEG) form the signal peptide. Cystine bridges form between cysteine 32–cysteine 88, cysteine 42–cysteine 66, cysteine 50–cysteine 82, and cysteine 64–cysteine 84.

The protein belongs to the DEFL family.

It localises to the secreted. This Arabidopsis thaliana (Mouse-ear cress) protein is Putative defensin-like protein 228 (SCRL3).